A 498-amino-acid polypeptide reads, in one-letter code: Glycerol kinase (498 aa).

T14 serves as a coordination point for ADP. Residues T14 and T15 each contribute to the ATP site. T14 contacts sn-glycerol 3-phosphate. Residue R18 participates in ADP binding. 4 residues coordinate sn-glycerol 3-phosphate: R84, E85, Y136, and D246. Glycerol-binding residues include R84, E85, Y136, D246, and Q247. 2 residues coordinate ADP: T268 and G311. The ATP site is built by T268, G311, Q315, and G412. 2 residues coordinate ADP: G412 and N416.

The protein belongs to the FGGY kinase family.

It carries out the reaction glycerol + ATP = sn-glycerol 3-phosphate + ADP + H(+). It functions in the pathway polyol metabolism; glycerol degradation via glycerol kinase pathway; sn-glycerol 3-phosphate from glycerol: step 1/1. With respect to regulation, inhibited by fructose 1,6-bisphosphate (FBP). Functionally, key enzyme in the regulation of glycerol uptake and metabolism. Catalyzes the phosphorylation of glycerol to yield sn-glycerol 3-phosphate. The protein is Glycerol kinase of Leptospira biflexa serovar Patoc (strain Patoc 1 / Ames).